The chain runs to 177 residues: Large ribosomal subunit protein uL6 (177 aa).

A compositionally biased stretch (basic and acidic residues) spans 152 to 171 (RPPEPYKGKGVRYDDEEVRR). The tract at residues 152–177 (RPPEPYKGKGVRYDDEEVRRKEAKKK) is disordered.

The protein belongs to the universal ribosomal protein uL6 family. Part of the 50S ribosomal subunit.

This protein binds to the 23S rRNA, and is important in its secondary structure. It is located near the subunit interface in the base of the L7/L12 stalk, and near the tRNA binding site of the peptidyltransferase center. This chain is Large ribosomal subunit protein uL6, found in Shewanella putrefaciens (strain CN-32 / ATCC BAA-453).